The chain runs to 257 residues: UPF0246 protein YaaA (257 aa).

It belongs to the UPF0246 family.

This is UPF0246 protein YaaA from Salmonella typhi.